The chain runs to 341 residues: Dual oxidase maturation factor 1 (341 aa).

Topologically, residues 1–24 (MAALGHTLPFYTGTKPTFPMDTTL) are extracellular. A helical transmembrane segment spans residues 25–45 (AVIITIFLTALVTFIIILPGI). The Cytoplasmic portion of the chain corresponds to 46 to 51 (RGKTRL). The chain crosses the membrane as a helical span at residues 52-72 (FWLLRVVTSLFIGAVILAVNF). Over 73–183 (SSEWSVGHVN…RLAGHYASAM (111 aa)) the chain is Extracellular. Asn84, Asn109, and Asn121 each carry an N-linked (GlcNAc...) asparagine glycan. Residues 184–204 (LWVAFLCWLLANVMLSMPVLV) traverse the membrane as a helical segment. Tyr205 is a topological domain (cytoplasmic). Residues 206–226 (GGHMLLATGLFQLLALFFFSM) form a helical membrane-spanning segment. Over 227–249 (TTSLISPCPLRLGTAVLHTHHGP) the chain is Extracellular. Residues 250–270 (AFWITLATGLLCILLGLVMAV) traverse the membrane as a helical segment. At 271–341 (AHRMQPHRLK…EHPKESDCSL (71 aa)) the chain is on the cytoplasmic side.

It belongs to the DUOXA family. As to quaternary structure, may interact with NUMB.

The protein resides in the membrane. May be required for the maturation and the transport from the endoplasmic reticulum to the plasma membrane of functional DUOX1. The polypeptide is Dual oxidase maturation factor 1 (Duoxa1) (Mus musculus (Mouse)).